We begin with the raw amino-acid sequence, 37 residues long: Large ribosomal subunit protein bL36B (37 aa).

The protein belongs to the bacterial ribosomal protein bL36 family.

In Saccharopolyspora erythraea (strain ATCC 11635 / DSM 40517 / JCM 4748 / NBRC 13426 / NCIMB 8594 / NRRL 2338), this protein is Large ribosomal subunit protein bL36B.